Reading from the N-terminus, the 167-residue chain is MNTEAVAPDVAEEEVLTSYTSESSASADDAPKKERPALTVSGAAVGRRKEAIARVRVTPGTGKWIVNGRELADYFPNKLHQQEVNEPFKILDLDGAYDVAARISGGGPSGQAGALRLGVARSLNEIDVDNNRATLKKAGFLTRDARVIERKKAGLKKARKAPQYSKR.

Positions 1-41 (MNTEAVAPDVAEEEVLTSYTSESSASADDAPKKERPALTVS) are disordered. Positions 17-26 (TSYTSESSAS) are enriched in polar residues.

Belongs to the universal ribosomal protein uS9 family.

This Renibacterium salmoninarum (strain ATCC 33209 / DSM 20767 / JCM 11484 / NBRC 15589 / NCIMB 2235) protein is Small ribosomal subunit protein uS9.